Consider the following 303-residue polypeptide: N-acetyl-D-glucosamine kinase (303 aa).

ATP-binding positions include 4-11 (GFDIGGTK) and 133-140 (GVGGGLIF). Residues His-157, Cys-177, Cys-179, and Cys-184 each coordinate Zn(2+).

This sequence belongs to the ROK (NagC/XylR) family. NagK subfamily.

It catalyses the reaction N-acetyl-D-glucosamine + ATP = N-acetyl-D-glucosamine 6-phosphate + ADP + H(+). It functions in the pathway cell wall biogenesis; peptidoglycan recycling. Its function is as follows. Catalyzes the phosphorylation of N-acetyl-D-glucosamine (GlcNAc) derived from cell-wall degradation, yielding GlcNAc-6-P. The polypeptide is N-acetyl-D-glucosamine kinase (Escherichia coli O9:H4 (strain HS)).